Reading from the N-terminus, the 88-residue chain is Small ribosomal subunit protein uS15 (88 aa).

This sequence belongs to the universal ribosomal protein uS15 family. In terms of assembly, part of the 30S ribosomal subunit. Forms a bridge to the 50S subunit in the 70S ribosome, contacting the 23S rRNA.

One of the primary rRNA binding proteins, it binds directly to 16S rRNA where it helps nucleate assembly of the platform of the 30S subunit by binding and bridging several RNA helices of the 16S rRNA. Its function is as follows. Forms an intersubunit bridge (bridge B4) with the 23S rRNA of the 50S subunit in the ribosome. The chain is Small ribosomal subunit protein uS15 from Methylacidiphilum infernorum (isolate V4) (Methylokorus infernorum (strain V4)).